The primary structure comprises 660 residues: MKTVVFAYHDMGCLGIEALLAAGYEISAIFTHTDNPGEKAFYGSVARLAAERGIPVYAPDNVNHPLWVERIAQLSPEVIFSFYYRHLICDEILQLAPRGAFNLHGSLLPKYRGRAPLNWVLVNGETETGVTLHRMVKRADAGAIVAQLRVAIAPDDIAITLHHKLCHAARQLLEQTLPAIKHGNILEIAQRENEATCFGRRTPDDSFLEWHKSASVLHNMVRAVADPWPGAFSYVGNQKFTVWSSRVHPHASKAQPGSVISVAPLLIACGDGALEIVTGQAGDGITMQGSQLAQTLGLVQGSRLNSQPACAARRRTRVLILGVNGFIGNHLTERLLREDHYEVYGLDIGSDAISRFMNHPHFHFVEGDISIHSEWIEYHVKKCDVVLPLVAIATPIEYTRNPLRVFELDFEENLRIIRYCVKYRKRIIFPSTSEVYGMCSDKYFDEDHSNLIVGPVNKPRWIYSVSKQLLDRVIWAYGEKEGLQFTLFRPFNWMGPRLDNLNAARIGSSRAITQLILNLVEGSPIKLIDGGKQKRCFTDIRDGIEALYRIIENAGNRCDGEIINIGNPENEASIEELGEMLLASFEKHPLRHYFPPFAGFRVVESSSYYGKGYQDVEHRKPSIRNARRCLDWEPKIDMQETIDETLDFFLRTVDLTDKPS.

Residues 1–304 (MKTVVFAYHD…TLGLVQGSRL (304 aa)) form a formyltransferase ArnAFT region. A (6R)-10-formyltetrahydrofolate-binding site is contributed by 86 to 88 (HLI). Residue histidine 104 is the Proton donor; for formyltransferase activity of the active site. (6R)-10-formyltetrahydrofolate is bound by residues arginine 114 and 136-140 (VKRAD). Positions 314–660 (RRTRVLILGV…RTVDLTDKPS (347 aa)) are dehydrogenase ArnADH. NAD(+) is bound by residues aspartate 347 and 368–369 (DI). UDP-alpha-D-glucuronate is bound by residues alanine 393, tyrosine 398, and 432-433 (TS). Glutamate 434 serves as the catalytic Proton acceptor; for decarboxylase activity. UDP-alpha-D-glucuronate-binding positions include arginine 460, asparagine 492, 526–535 (KLIDGGKQKR), and tyrosine 613. Arginine 619 serves as the catalytic Proton donor; for decarboxylase activity.

The protein in the N-terminal section; belongs to the Fmt family. UDP-L-Ara4N formyltransferase subfamily. This sequence in the C-terminal section; belongs to the NAD(P)-dependent epimerase/dehydratase family. UDP-glucuronic acid decarboxylase subfamily. As to quaternary structure, homohexamer, formed by a dimer of trimers.

It carries out the reaction UDP-alpha-D-glucuronate + NAD(+) = UDP-beta-L-threo-pentopyranos-4-ulose + CO2 + NADH. The catalysed reaction is UDP-4-amino-4-deoxy-beta-L-arabinose + (6R)-10-formyltetrahydrofolate = UDP-4-deoxy-4-formamido-beta-L-arabinose + (6S)-5,6,7,8-tetrahydrofolate + H(+). Its pathway is nucleotide-sugar biosynthesis; UDP-4-deoxy-4-formamido-beta-L-arabinose biosynthesis; UDP-4-deoxy-4-formamido-beta-L-arabinose from UDP-alpha-D-glucuronate: step 1/3. It participates in nucleotide-sugar biosynthesis; UDP-4-deoxy-4-formamido-beta-L-arabinose biosynthesis; UDP-4-deoxy-4-formamido-beta-L-arabinose from UDP-alpha-D-glucuronate: step 3/3. The protein operates within bacterial outer membrane biogenesis; lipopolysaccharide biosynthesis. Bifunctional enzyme that catalyzes the oxidative decarboxylation of UDP-glucuronic acid (UDP-GlcUA) to UDP-4-keto-arabinose (UDP-Ara4O) and the addition of a formyl group to UDP-4-amino-4-deoxy-L-arabinose (UDP-L-Ara4N) to form UDP-L-4-formamido-arabinose (UDP-L-Ara4FN). The modified arabinose is attached to lipid A and is required for resistance to polymyxin and cationic antimicrobial peptides. The polypeptide is Bifunctional polymyxin resistance protein ArnA (Escherichia coli O6:H1 (strain CFT073 / ATCC 700928 / UPEC)).